Reading from the N-terminus, the 480-residue chain is Endothelial transcription factor GATA-2 (480 aa).

A Phosphoserine modification is found at S73. An Asymmetric dimethylarginine modification is found at R86. The segment at 119–209 (SPFSKTPLHP…GSAARGEDKD (91 aa)) is disordered. Residues 143 to 153 (GAGGGSGGGSG) are compositionally biased toward gly residues. The span at 185–203 (PSTTGAASPASSSAGGSAA) shows a compositional bias: low complexity. S192 bears the Phosphoserine mark. GATA-type zinc fingers lie at residues 295 to 319 (CVNC…CNAC) and 349 to 373 (CANC…CNAC). A Glycyl lysine isopeptide (Lys-Gly) (interchain with G-Cter in SUMO2) cross-link involves residue K389. Positions 448–480 (HSGHILPTPTPIHPSSSLSFGHPHPSSMVTAMG) are disordered.

As to quaternary structure, interacts with BRD3. Interacts with AR and CCAR1. Interacts with MDFIC. Endothelial cells.

It is found in the nucleus. Functionally, transcriptional activator which regulates endothelin-1 gene expression in endothelial cells. Binds to the consensus sequence 5'-AGATAG-3'. The sequence is that of Endothelial transcription factor GATA-2 (GATA2) from Homo sapiens (Human).